Reading from the N-terminus, the 448-residue chain is Methionine aminopeptidase 2-1 (448 aa).

The segment at 1 to 83 (MAAQVIPELQ…TQKAQTEPPR (83 aa)) is disordered. The segment covering 32-48 (ENEDGDSEDDNGDDQGA) has biased composition (acidic residues). The segment covering 59-73 (AKKKKKKKPKKKKKD) has biased composition (basic residues). A substrate-binding site is contributed by histidine 198. A divalent metal cation is bound by residues aspartate 218, aspartate 229, and histidine 298. Residue histidine 306 coordinates substrate. Glutamate 334 and glutamate 429 together coordinate a divalent metal cation.

It belongs to the peptidase M24A family. Methionine aminopeptidase eukaryotic type 2 subfamily. Co(2+) is required as a cofactor. Requires Zn(2+) as cofactor. It depends on Mn(2+) as a cofactor. The cofactor is Fe(2+).

The protein resides in the cytoplasm. It catalyses the reaction Release of N-terminal amino acids, preferentially methionine, from peptides and arylamides.. Its function is as follows. Cotranslationally removes the N-terminal methionine from nascent proteins. The N-terminal methionine is often cleaved when the second residue in the primary sequence is small and uncharged (Met-Ala-, Cys, Gly, Pro, Ser, Thr, or Val). The chain is Methionine aminopeptidase 2-1 from Ajellomyces capsulatus (strain G186AR / H82 / ATCC MYA-2454 / RMSCC 2432) (Darling's disease fungus).